Consider the following 174-residue polypeptide: Adenylate kinase (174 aa).

Positions 12–41 are NMP; that stretch reads STGDMLRAAIKAGTPLGLEAKKIIDEGGLV. AMP is bound by residues Thr-13, Arg-18, 39-41, 67-70, and Gln-74; these read GLV and GFPR. Residues 104 to 141 are LID; the sequence is GRRVHLASGRTYHVTYNPPKVEGKDDVTGEDLIQRDDD. Residues Arg-105 and 114 to 115 each bind ATP; that span reads TY. 2 residues coordinate AMP: Arg-138 and Arg-149.

Belongs to the adenylate kinase family. Monomer.

The protein resides in the cytoplasm. It carries out the reaction AMP + ATP = 2 ADP. It participates in purine metabolism; AMP biosynthesis via salvage pathway; AMP from ADP: step 1/1. In terms of biological role, catalyzes the reversible transfer of the terminal phosphate group between ATP and AMP. Plays an important role in cellular energy homeostasis and in adenine nucleotide metabolism. This is Adenylate kinase from Neisseria lactamica.